Reading from the N-terminus, the 702-residue chain is Glucosidase 2 subunit beta (702 aa).

A signal peptide spans 1-20; that stretch reads MVSMFSLFLLLIEQSPLVAS. N-linked (GlcNAc...) asparagine glycosylation occurs at Asn-145. The stretch at 163 to 228 forms a coiled coil; the sequence is SYREGKEALE…LRGEYFNQLS (66 aa). Asn-240 and Asn-358 each carry an N-linked (GlcNAc...) asparagine glycan. A disordered region spans residues 435–457; sequence PKVLPPDAVESEQDTNSDHIGTS. Residues 478–517 are a coiled coil; that stretch reads KDLVSLEKRFRSCESQVSLLENELKQKMDYKKLLDETEDE. N-linked (GlcNAc...) asparagine glycans are attached at residues Asn-520 and Asn-525. An MRH domain is found at 537–689; sequence SYCLDDILDN…DVVGPLGCNK (153 aa). 3 cysteine pairs are disulfide-bonded: Cys-539–Cys-552, Cys-646–Cys-675, and Cys-660–Cys-687. Asn-688 and Asn-699 each carry an N-linked (GlcNAc...) asparagine glycan.

Heterodimer of a catalytic subunit alpha (ROT2) and a subunit beta (GTB1).

It is found in the endoplasmic reticulum. Functionally, subunit of glucosidase 2, which cleaves sequentially the 2 innermost alpha-1,3-linked glucose residues from the Glc(2)Man(9)GlcNAc(2) oligosaccharide precursor of immature glycoproteins. Specifically required for the cleavage of the final glucose. In Saccharomyces cerevisiae (strain ATCC 204508 / S288c) (Baker's yeast), this protein is Glucosidase 2 subunit beta (GTB1).